The sequence spans 234 residues: Orotidine 5'-phosphate decarboxylase (234 aa).

Substrate contacts are provided by residues Asp-11, Lys-33, 60–69 (DLKFHDIPNT), Thr-120, Arg-181, Gln-190, Gly-210, and Arg-211. The active-site Proton donor is the Lys-62.

It belongs to the OMP decarboxylase family. Type 1 subfamily. Homodimer.

It catalyses the reaction orotidine 5'-phosphate + H(+) = UMP + CO2. It participates in pyrimidine metabolism; UMP biosynthesis via de novo pathway; UMP from orotate: step 2/2. Functionally, catalyzes the decarboxylation of orotidine 5'-monophosphate (OMP) to uridine 5'-monophosphate (UMP). The sequence is that of Orotidine 5'-phosphate decarboxylase from Shewanella sediminis (strain HAW-EB3).